A 380-amino-acid chain; its full sequence is Erythronate-4-phosphate dehydrogenase (380 aa).

Substrate-binding residues include Ser-45 and Thr-66. NAD(+)-binding positions include Gln-126–Val-127, Asp-146, Thr-175, Ala-206–Arg-208, and Asp-232. The active site involves Arg-208. The active site involves Glu-237. His-254 acts as the Proton donor in catalysis. Residue Gly-257 participates in NAD(+) binding. Tyr-258 contributes to the substrate binding site.

This sequence belongs to the D-isomer specific 2-hydroxyacid dehydrogenase family. PdxB subfamily. As to quaternary structure, homodimer.

The protein localises to the cytoplasm. It catalyses the reaction 4-phospho-D-erythronate + NAD(+) = (R)-3-hydroxy-2-oxo-4-phosphooxybutanoate + NADH + H(+). Its pathway is cofactor biosynthesis; pyridoxine 5'-phosphate biosynthesis; pyridoxine 5'-phosphate from D-erythrose 4-phosphate: step 2/5. Functionally, catalyzes the oxidation of erythronate-4-phosphate to 3-hydroxy-2-oxo-4-phosphonooxybutanoate. This chain is Erythronate-4-phosphate dehydrogenase, found in Pseudomonas aeruginosa (strain UCBPP-PA14).